The following is a 732-amino-acid chain: Myosin heavy chain kinase B (732 aa).

The Alpha-type protein kinase domain maps to 124-328 (DPYTTTAQWT…ICQYLNLQSI (205 aa)). 298–303 (GIGNLG) is an ATP binding site. Residues 331–428 (KSEKSDCGTV…TNKERSKSKS (98 aa)) are disordered. Low complexity predominate over residues 356–394 (NNNNNNNNNNNNNNNNNNSNNNNNNNSSISKSLVEISSG). A compositionally biased stretch (basic and acidic residues) spans 395–404 (SKERNDRDSP). Residues 405–419 (SRQLFVSNDGNTLNT) show a composition bias toward polar residues. WD repeat units follow at residues 458 to 486 (KGYH…RVYD), 500 to 528 (GHEG…KVWD), 540 to 568 (GHDK…KVWD), 580 to 608 (SHAR…KVWD), 620 to 648 (GHTK…RVWN), 660 to 688 (GHDR…KIWD), and 700 to 730 (GHNA…RVWG).

Belongs to the protein kinase superfamily. Alpha-type protein kinase family. ALPK subfamily.

It carries out the reaction L-threonyl-[myosin heavy-chain] + ATP = O-phospho-L-threonyl-[myosin heavy-chain] + ADP + H(+). Its function is as follows. Catalyzes its autophosphorylation, which is needed for enzymatic activity and phosphorylates myosin II heavy chain at a threonine in the C-terminal tail region. This phosphorylation is critical in regulating the assembly and disassembly of myosin II filament. Participates in control of myosin localization. This is Myosin heavy chain kinase B (mhkB) from Dictyostelium discoideum (Social amoeba).